A 1383-amino-acid polypeptide reads, in one-letter code: Cell surface hyaluronidase CEMIP2 (1383 aa).

The tract at residues 1 to 50 (MYATDSRGHSPAFLQPQNGNSRHPSGYVPGKVVPLRPPPPPKSQASAKFT) is disordered. At 1 to 82 (MYATDSRGHS…SQKQKRHKNT (82 aa)) the chain is on the cytoplasmic side. A phosphoserine mark is found at Ser10 and Ser63. Residues 83–103 (FICFAITSFSFFIALAIILGI) form a helical; Signal-anchor for type II membrane protein membrane-spanning segment. The Extracellular portion of the chain corresponds to 104–1383 (SSKYAPDENC…ELLKQASKAH (1280 aa)). The 125-residue stretch at 121–245 (RNWDPGQDSA…RKASWTLLAR (125 aa)) folds into the G8 domain. N-linked (GlcNAc...) asparagine glycosylation is found at Asn248 and Asn292. Residues 255–412 (GSYTFEKDFS…VSLSGFRVEV (158 aa)) form the GG-type lectin 1 domain. PbH1 repeat units lie at residues 669-691 (HPNN…WYLF), 711-733 (TPLG…FIDK), and 791-812 (GGDI…TFAS). N-linked (GlcNAc...) asparagine glycosylation is found at Asn914 and Asn1234. In terms of domain architecture, GG-type lectin 2 spans 1208–1366 (KSYLPVQFQS…LDEYGCPRAT (159 aa)).

The protein belongs to the CEMIP family. In terms of tissue distribution, widely expressed.

It is found in the cell membrane. The enzyme catalyses Random hydrolysis of (1-&gt;4)-linkages between N-acetyl-beta-D-glucosamine and D-glucuronate residues in hyaluronate.. Cell surface hyaluronidase that mediates the initial cleavage of extracellular high-molecular-weight hyaluronan into intermediate-size hyaluronan of approximately 10-5 kDa fragments. Very specific to hyaluronan; not able to cleave chondroitin sulfate or dermatan sulfate. Has an essential function in systemic hyaluronan catabolism and turnover and regulates cell adhesion and migration via hyaluronan degradation at focal adhesion sites. Acts as a regulator of angiogenesis and heart morphogenesis by mediating degradation of extracellular hyaluronan, thereby regulating VEGF signaling. The chain is Cell surface hyaluronidase CEMIP2 from Homo sapiens (Human).